The primary structure comprises 108 residues: UPF0060 membrane protein YnfA (108 aa).

The Periplasmic portion of the chain corresponds to 1–5 (MIKTT). Residues 6–26 (LLFFATALCEIIGCFLPWLWL) traverse the membrane as a helical segment. Topologically, residues 27 to 30 (KRNA) are cytoplasmic. Residues 31–51 (SIWLLLPAGISLALFVWLLTL) form a helical membrane-spanning segment. The Periplasmic segment spans residues 52–60 (HPAASGRVY). The chain crosses the membrane as a helical span at residues 61-81 (AAYGGVYVCTALMWLRVVDGV). Residues 82-84 (KLS) are Cytoplasmic-facing. The chain crosses the membrane as a helical span at residues 85–105 (LYDWTGALIALCGMLIIVAGW). The Periplasmic portion of the chain corresponds to 106–108 (GRT).

The protein belongs to the UPF0060 family.

Its subcellular location is the cell inner membrane. This Shigella flexneri serotype 5b (strain 8401) protein is UPF0060 membrane protein YnfA.